The following is a 272-amino-acid chain: Glycerol-3-phosphate acyltransferase (272 aa).

6 helical membrane passes run 9-29 (IIILFLFIGYFIGNILFGILI), 60-80 (AIVMVLDFFKSWFSTFVCLLI), 99-119 (VIIYLGGFAAIIGHCFPCFYF), 149-169 (ASISPWMFFICFVLFWSICLI), 173-193 (VSLASIVTVFLLPIWSLIPHL), and 226-246 (LNWWYILVTFLLELLTAVLVI).

Belongs to the PlsY family. As to quaternary structure, probably interacts with PlsX.

It is found in the cell membrane. The enzyme catalyses an acyl phosphate + sn-glycerol 3-phosphate = a 1-acyl-sn-glycero-3-phosphate + phosphate. Its pathway is lipid metabolism; phospholipid metabolism. In terms of biological role, catalyzes the transfer of an acyl group from acyl-phosphate (acyl-PO(4)) to glycerol-3-phosphate (G3P) to form lysophosphatidic acid (LPA). This enzyme utilizes acyl-phosphate as fatty acyl donor, but not acyl-CoA or acyl-ACP. In Malacoplasma penetrans (strain HF-2) (Mycoplasma penetrans), this protein is Glycerol-3-phosphate acyltransferase.